We begin with the raw amino-acid sequence, 122 residues long: uncharacterized protein (122 aa).

This is an uncharacterized protein from Dictyostelium discoideum (Social amoeba).